We begin with the raw amino-acid sequence, 180 residues long: UPF0149 protein XC_0904 (180 aa).

Belongs to the UPF0149 family.

In Xanthomonas campestris pv. campestris (strain 8004), this protein is UPF0149 protein XC_0904.